Here is a 692-residue protein sequence, read N- to C-terminus: MMRPIVVKEKQIHVVEDEVRQAKTMDRDIVKHAMKQSFAKLNPKVMIKNPIMFVVEIGFIITFILSFLPSHSSSVPGWFNITVSLILLFTVLFANFAEALAEGRGKAQADSLKQSKKDVFANVVKENGDIVQVSATDLRKGDLVIVKQGEMIPSDGEVIKGLASVDESAITGESAPVIKEAGGDFCSVTGGTMVVSDEITIVITSNPGESFIDKMISLVEGAARQKTPNEIALNTVLTSLTLIFLIVVVTLPIFTNYLGFQIDTAVLVALLVCLIPTTIGGLLSAIGIAGMDRVTKFNVLAMSGKAVEAAGDINTIILDKTGTITFGNRMAHTLLPVGNETIEQVGKWAAISSVLDETPEGRSVIEYVKTKSISYNREIAEQGEFVPFKAETRMSGVDLQDGTKVRKGAVGSVIEWVRSQGGTIPKDVNQKADFISKEGGTPLVVAVDNRIYGLIYLKDTVKPGMRERFEQLRQMGIKTVMCTGDNPLTAATIAKEAGVDEFVAECKPEDKIAVIKAEQDKGKLVAMTGDGTNDAPALAQADVGLAMNSGTTAAKEAANMIDLDSNPTKIIEVVGIGKQLLMTRGALTTFSIANDIAKYFAIIPAMFTLAIPQMEALNIMKLTSPLSAILSALIFNAVIIPLLIPLAMKGIAYKPMSSNALLGRNLLIYGLGGVIVPFIGIKVIDIIVGLFI.

4 helical membrane-spanning segments follow: residues 50 to 70, 77 to 97, 240 to 260, and 266 to 286; these read PIMFVVEIGFIITFILSFLPS, GWFNITVSLILLFTVLFANFA, LTLIFLIVVVTLPIFTNYLGF, and VLVALLVCLIPTTIGGLLSAI. The 4-aspartylphosphate intermediate role is filled by Asp-319. ATP-binding positions include Asp-356, Glu-360, 388-395, and Lys-407; that span reads FKAETRMS. The Mg(2+) site is built by Asp-530 and Asp-534. 3 consecutive transmembrane segments (helical) span residues 600 to 620, 628 to 648, and 672 to 692; these read FAIIPAMFTLAIPQMEALNIM, AILSALIFNAVIIPLLIPLAM, and GGVIVPFIGIKVIDIIVGLFI.

Belongs to the cation transport ATPase (P-type) (TC 3.A.3) family. Type IA subfamily. The system is composed of three essential subunits: KdpA, KdpB and KdpC.

The protein localises to the cell membrane. The enzyme catalyses K(+)(out) + ATP + H2O = K(+)(in) + ADP + phosphate + H(+). Functionally, part of the high-affinity ATP-driven potassium transport (or Kdp) system, which catalyzes the hydrolysis of ATP coupled with the electrogenic transport of potassium into the cytoplasm. This subunit is responsible for energy coupling to the transport system and for the release of the potassium ions to the cytoplasm. In Bacillus cereus (strain 03BB102), this protein is Potassium-transporting ATPase ATP-binding subunit.